Here is a 538-residue protein sequence, read N- to C-terminus: Putative cysteine ligase BshC (538 aa).

Positions 460-483 form a coiled coil; sequence KINEQIELLEKMLKRNVEKKHEVQ.

This sequence belongs to the BshC family.

In terms of biological role, involved in bacillithiol (BSH) biosynthesis. May catalyze the last step of the pathway, the addition of cysteine to glucosamine malate (GlcN-Mal) to generate BSH. In Bacillus mycoides (strain KBAB4) (Bacillus weihenstephanensis), this protein is Putative cysteine ligase BshC.